Consider the following 269-residue polypeptide: Formamidopyrimidine-DNA glycosylase (269 aa).

Residue Pro2 is the Schiff-base intermediate with DNA of the active site. Residue Glu3 is the Proton donor of the active site. The active-site Proton donor; for beta-elimination activity is Lys57. The DNA site is built by His90, Arg109, and Lys150. The FPG-type zinc finger occupies 235–269; that stretch reads QVYGRAGEPCRQCGHPIEIAKHGQRSTFFCRHCQH. Arg259 serves as the catalytic Proton donor; for delta-elimination activity.

This sequence belongs to the FPG family. Monomer. Zn(2+) is required as a cofactor.

The enzyme catalyses Hydrolysis of DNA containing ring-opened 7-methylguanine residues, releasing 2,6-diamino-4-hydroxy-5-(N-methyl)formamidopyrimidine.. It carries out the reaction 2'-deoxyribonucleotide-(2'-deoxyribose 5'-phosphate)-2'-deoxyribonucleotide-DNA = a 3'-end 2'-deoxyribonucleotide-(2,3-dehydro-2,3-deoxyribose 5'-phosphate)-DNA + a 5'-end 5'-phospho-2'-deoxyribonucleoside-DNA + H(+). Involved in base excision repair of DNA damaged by oxidation or by mutagenic agents. Acts as a DNA glycosylase that recognizes and removes damaged bases. Has a preference for oxidized purines, such as 7,8-dihydro-8-oxoguanine (8-oxoG). Has AP (apurinic/apyrimidinic) lyase activity and introduces nicks in the DNA strand. Cleaves the DNA backbone by beta-delta elimination to generate a single-strand break at the site of the removed base with both 3'- and 5'-phosphates. The polypeptide is Formamidopyrimidine-DNA glycosylase (Yersinia pseudotuberculosis serotype O:1b (strain IP 31758)).